The sequence spans 1063 residues: Valine--tRNA ligase, mitochondrial (1063 aa).

A mitochondrion-targeting transit peptide spans 1–26 (MPHLPLASFRPPFWGLRHSRGLPRFH). A disordered region spans residues 25–53 (FHSVSTQSEPHGSPISRRNREAKQKRLRE). Basic and acidic residues predominate over residues 42-53 (RNREAKQKRLRE). The short motif at 146-156 (PNVTGSLHIGH) is the 'HIGH' region element. The 'KMSKS' region motif lies at 658–662 (KMSKS). K661 provides a ligand contact to ATP.

It belongs to the class-I aminoacyl-tRNA synthetase family.

The protein localises to the mitochondrion. It carries out the reaction tRNA(Val) + L-valine + ATP = L-valyl-tRNA(Val) + AMP + diphosphate. In terms of biological role, catalyzes the attachment of valine to tRNA(Val) in a two-step reaction: valine is first activated by ATP to form Val-AMP and then transferred to the acceptor end of tRNA(Val). The polypeptide is Valine--tRNA ligase, mitochondrial (VARS2) (Homo sapiens (Human)).